The chain runs to 489 residues: Argininosuccinate lyase (489 aa).

The disordered stretch occupies residues 462–489 (QARYQQTEPAEEPPLPPSSPGSGLPLES).

The protein belongs to the lyase 1 family. Argininosuccinate lyase subfamily.

The protein localises to the cytoplasm. The enzyme catalyses 2-(N(omega)-L-arginino)succinate = fumarate + L-arginine. The protein operates within amino-acid biosynthesis; L-arginine biosynthesis; L-arginine from L-ornithine and carbamoyl phosphate: step 3/3. The polypeptide is Argininosuccinate lyase (Synechococcus sp. (strain JA-3-3Ab) (Cyanobacteria bacterium Yellowstone A-Prime)).